Here is a 678-residue protein sequence, read N- to C-terminus: MSHSNAPELHPQIVDPFHNVTYRPGKLLGKGGFAYVYEFHDVNSDSSYACKITPRSALQKKKYYDKFVTEVTIHRGLVHPNICRVLNVFKDQMNYYIILEKCNGGTLTDLIRRRKHLTETEARFFSKRILNALWYLHDLYIIHRDIKTSNIFLMEDFDVKVGDFGLAVKCETPEELHWTMCGTPNFLPSEVIYSHIMKRKASGRGPDPNLDEDCVNLCHQLLPAYSGQGHSFSADMWSFGCLVFSMIYGRPPFEAADIKTTYKRIVRCDFSFPGSISVSEDLKNFIKGLLTPDPRKRFTVKECLDHSWLNPSKYFIPESLPPRIISEPYEVPPLCSASPTRNMQMTINMAKNAGGTDGRFIAATPQAIGGTEHIPTPGTANFYKPQNAILTTKSAAGISRASTAMAMQNVGSAQGVVNKYGINEAEYPQIDPPCYIMSWVDYSNRYGFAYQISNGSIGVIFNDESAAILSPNALIVDYSPSLLDAAFDRALFEEGTTILSEKKFKLLSFFRDYLENRSIVPIPAADRPKEDEELKRVIEQERMNNQEIDFKRLTKGLPLPQLFLKKWKLYDDGTLCLLFNTKVFQVNFADHSKVVVAHRSVTFMSEKREIYTYPSEYLKDDRFSFKELRRRVDRARKYYEIIKAARPVDSLAQYRYNKDSTKKSASGSSTRQLGQGGE.

In terms of domain architecture, Protein kinase spans 22-309 (YRPGKLLGKG…VKECLDHSWL (288 aa)). ATP is bound by residues 28 to 36 (LGKGGFAYV) and Lys-51. The Proton acceptor role is filled by Asp-145. 2 positions are modified to phosphothreonine; by autocatalysis: Thr-179 and Thr-183. POLO box domains are found at residues 435–516 (YIMS…YLEN) and 563–644 (FLKK…IIKA). The interval 658 to 678 (KDSTKKSASGSSTRQLGQGGE) is disordered. Over residues 663-678 (KSASGSSTRQLGQGGE) the composition is skewed to polar residues.

The protein belongs to the protein kinase superfamily. Ser/Thr protein kinase family. CDC5/Polo subfamily. As to quaternary structure, interacts with Kin-13. Autophosphorylated. Autophosphorylation is critical for its function in cell growth, cytokinesis and formation of flagella.

It is found in the cell projection. The protein localises to the cilium. It localises to the flagellum. The protein resides in the cytoplasm. Its subcellular location is the cytoskeleton. It is found in the flagellum basal body. The protein localises to the flagellum axoneme. It localises to the spindle. The protein resides in the membrane. It carries out the reaction L-seryl-[protein] + ATP = O-phospho-L-seryl-[protein] + ADP + H(+). The catalysed reaction is L-threonyl-[protein] + ATP = O-phospho-L-threonyl-[protein] + ADP + H(+). Its activity is regulated as follows. Inhibited by GW843286X (GW), an ATP-competitive inhibitor. Inhibition leads to reduced growth, increased number of cells with more than four nuclei, increased number of cells with condensed nuclei, cell cycle arrest at G2/M or G1/S phase depending on the treatment time with GW, and increased length of membrane-bound portions of the caudal and anterior flagella. In terms of biological role, involved in cell cycle. Involved in cell division. Involved in cytokinesis. Involved in flagella biogenesis and in regulation of flagella length in interphase. Involved in formation of median bodies during interphase. Phosphorylates Kin-13 in vitro. Likely regulates microtubule (MT) depolymerizing activity of Kin-13. The chain is Serine/threonine-protein kinase PLK from Giardia intestinalis (strain ATCC 50803 / WB clone C6) (Giardia lamblia).